The sequence spans 342 residues: Elongation factor Ts (342 aa).

Residues 79–82 are involved in Mg(2+) ion dislocation from EF-Tu; that stretch reads TDFV.

This sequence belongs to the EF-Ts family.

It is found in the cytoplasm. Associates with the EF-Tu.GDP complex and induces the exchange of GDP to GTP. It remains bound to the aminoacyl-tRNA.EF-Tu.GTP complex up to the GTP hydrolysis stage on the ribosome. The protein is Elongation factor Ts (tsf) of Lactococcus lactis subsp. lactis (strain IL1403) (Streptococcus lactis).